A 215-amino-acid polypeptide reads, in one-letter code: Uridine kinase (215 aa).

An ATP-binding site is contributed by 16–23 (GASASGKS).

This sequence belongs to the uridine kinase family.

It is found in the cytoplasm. It carries out the reaction uridine + ATP = UMP + ADP + H(+). The catalysed reaction is cytidine + ATP = CMP + ADP + H(+). Its pathway is pyrimidine metabolism; CTP biosynthesis via salvage pathway; CTP from cytidine: step 1/3. It participates in pyrimidine metabolism; UMP biosynthesis via salvage pathway; UMP from uridine: step 1/1. This is Uridine kinase from Aliivibrio fischeri (strain ATCC 700601 / ES114) (Vibrio fischeri).